We begin with the raw amino-acid sequence, 915 residues long: Alanine--tRNA ligase (915 aa).

Zn(2+) is bound by residues His609, His613, Cys712, and His716.

It belongs to the class-II aminoacyl-tRNA synthetase family. The cofactor is Zn(2+).

The protein resides in the cytoplasm. The enzyme catalyses tRNA(Ala) + L-alanine + ATP = L-alanyl-tRNA(Ala) + AMP + diphosphate. Functionally, catalyzes the attachment of alanine to tRNA(Ala) in a two-step reaction: alanine is first activated by ATP to form Ala-AMP and then transferred to the acceptor end of tRNA(Ala). Also edits incorrectly charged Ser-tRNA(Ala) and Gly-tRNA(Ala) via its editing domain. In Methanoculleus marisnigri (strain ATCC 35101 / DSM 1498 / JR1), this protein is Alanine--tRNA ligase.